Consider the following 255-residue polypeptide: 3-deoxy-manno-octulosonate cytidylyltransferase (255 aa).

This sequence belongs to the KdsB family.

The protein resides in the cytoplasm. It catalyses the reaction 3-deoxy-alpha-D-manno-oct-2-ulosonate + CTP = CMP-3-deoxy-beta-D-manno-octulosonate + diphosphate. The protein operates within nucleotide-sugar biosynthesis; CMP-3-deoxy-D-manno-octulosonate biosynthesis; CMP-3-deoxy-D-manno-octulosonate from 3-deoxy-D-manno-octulosonate and CTP: step 1/1. It functions in the pathway bacterial outer membrane biogenesis; lipopolysaccharide biosynthesis. Functionally, activates KDO (a required 8-carbon sugar) for incorporation into bacterial lipopolysaccharide in Gram-negative bacteria. The polypeptide is 3-deoxy-manno-octulosonate cytidylyltransferase (Pelobacter propionicus (strain DSM 2379 / NBRC 103807 / OttBd1)).